A 65-amino-acid chain; its full sequence is Large ribosomal subunit protein bL35 (65 aa).

The protein belongs to the bacterial ribosomal protein bL35 family.

The protein is Large ribosomal subunit protein bL35 of Parasynechococcus marenigrum (strain WH8102).